Consider the following 1163-residue polypeptide: Carbamoyl phosphate synthase large chain (1163 aa).

The carboxyphosphate synthetic domain stretch occupies residues 1-456; the sequence is MPKRQDIKSI…SLQKALRGLE (456 aa). Position 129 (Arg129) interacts with ATP. The disordered stretch occupies residues 148-170; sequence LANATDIKDHDRKSHEAERSALK. A compositionally biased stretch (basic and acidic residues) spans 153 to 170; sequence DIKDHDRKSHEAERSALK. The region spanning 185-381 is the ATP-grasp 1 domain; it reads LENQWNLGEG…IAKIAAKLAV (197 aa). ATP contacts are provided by Arg222, Gly228, Gly229, Glu261, Val263, Glu268, Gly294, Val295, His296, Gln338, and Glu352. Mg(2+) contacts are provided by Gln338, Glu352, and Asn354. Mn(2+)-binding residues include Gln338, Glu352, and Asn354. The tract at residues 457–614 is oligomerization domain; the sequence is TGLTGLDEIE…PFVGAARSEA (158 aa). The tract at residues 615-1026 is carbamoyl phosphate synthetic domain; sequence QVSDRKKVVI…AFAKSQLGAG (412 aa). The region spanning 743 to 955 is the ATP-grasp 2 domain; that stretch reads QKLLMKLDLN…IAKIAARVMA (213 aa). ATP contacts are provided by Arg779, Ser839, Leu841, Glu846, Gly871, Ile872, His873, Ser874, Gln914, and Glu926. Mg(2+) is bound by residues Gln914, Glu926, and Asn928. Gln914, Glu926, and Asn928 together coordinate Mn(2+). Positions 1027–1163 constitute an MGS-like domain; the sequence is VDLPRDGTVF…VRPLQSYFET (137 aa). The allosteric domain stretch occupies residues 1027-1163; sequence VDLPRDGTVF…VRPLQSYFET (137 aa).

Belongs to the CarB family. Composed of two chains; the small (or glutamine) chain promotes the hydrolysis of glutamine to ammonia, which is used by the large (or ammonia) chain to synthesize carbamoyl phosphate. Tetramer of heterodimers (alpha,beta)4. The cofactor is Mg(2+). Mn(2+) is required as a cofactor.

The enzyme catalyses hydrogencarbonate + L-glutamine + 2 ATP + H2O = carbamoyl phosphate + L-glutamate + 2 ADP + phosphate + 2 H(+). It carries out the reaction hydrogencarbonate + NH4(+) + 2 ATP = carbamoyl phosphate + 2 ADP + phosphate + 2 H(+). The protein operates within amino-acid biosynthesis; L-arginine biosynthesis; carbamoyl phosphate from bicarbonate: step 1/1. It functions in the pathway pyrimidine metabolism; UMP biosynthesis via de novo pathway; (S)-dihydroorotate from bicarbonate: step 1/3. Functionally, large subunit of the glutamine-dependent carbamoyl phosphate synthetase (CPSase). CPSase catalyzes the formation of carbamoyl phosphate from the ammonia moiety of glutamine, carbonate, and phosphate donated by ATP, constituting the first step of 2 biosynthetic pathways, one leading to arginine and/or urea and the other to pyrimidine nucleotides. The large subunit (synthetase) binds the substrates ammonia (free or transferred from glutamine from the small subunit), hydrogencarbonate and ATP and carries out an ATP-coupled ligase reaction, activating hydrogencarbonate by forming carboxy phosphate which reacts with ammonia to form carbamoyl phosphate. In Rhizobium meliloti (strain 1021) (Ensifer meliloti), this protein is Carbamoyl phosphate synthase large chain.